A 108-amino-acid polypeptide reads, in one-letter code: Circadian clock oscillator protein KaiB (108 aa).

Belongs to the KaiB family. Undergoes a major conformational rearrangment; in the free state forms homotetramers with 2 dimers. When bound to the CI domain of KaiC, KaiA or CikA switches to a monomeric thioredoxin-fold (KaiB(fs)). The KaiABC complex composition changes during the circadian cycle to control KaiC phosphorylation. Complexes KaiC(6), KaiA(2-4):KaiC(6), KaiB(6):KaiC(6) and KaiC(6):KaiB(6):KaiA(12) are among the most important forms, many form cooperatively. Binds to KaiA; 1 KaiB(fs) binds to the KaiA homodimer. Binds to the B-loop in the CI domain of KaiC; SasA and KaiB compete to bind to the CI domain. Binding to KaiC CI domain occurs 1:1. KaiA and CikA bind to the same region of KaiB(fs) and therefore compete.

Its function is as follows. Key component of the KaiABC oscillator complex, which constitutes the main circadian regulator in cyanobacteria. Its composition changes during the circadian cycle to control KaiC phosphorylation. KaiA stimulates KaiC autophosphorylation, while KaiB sequesters KaiA, leading to KaiC autodephosphorylation. KaiA binding to KaiC yields KaiA(2-4):KaiC(6) complexes which stimulate KaiC autophosphorylation. Phospho-Ser-431 KaiC accumulation triggers binding of KaiB to form the KaiB(6):KaiC(6) complex, leading to changes in the output regulators CikA and SasA. KaiB switches to a thioredoxin-like fold (KaiB(fs)) in complex with KaiC. KaiB(6):KaiC(6) formation exposes a site for KaiA binding that sequesters KaiA from the CII domain, making the KaiC(6):KaiB(6):KaiA(12) complex that results in KaiC autodephosphorylation. Complete dephosphorylation of KaiC leads to dissociation of KaiA(2):KaiB(1), completing 1 cycle of the Kai oscillator. A metamorphic protein which reversibly switches between an inactive tetrameric fold and a rare, thioredoxin-like monomeric fold (KaiB(fs)). KaiB(fs) binds phospho-KaiC, KaiA and CikA. KaiA and CikA compete for binding to KaiB(fs), and KaiB(fs) and SasA compete for binding to KaiC, thus the clock oscillator and output signal pathway are tightly coupled. The chain is Circadian clock oscillator protein KaiB from Thermosynechococcus vestitus (strain NIES-2133 / IAM M-273 / BP-1).